Reading from the N-terminus, the 280-residue chain is Ribosomal RNA small subunit methyltransferase A (280 aa).

S-adenosyl-L-methionine contacts are provided by Asn30, Val32, Gly57, Glu78, Asp108, and Asn125.

The protein belongs to the class I-like SAM-binding methyltransferase superfamily. rRNA adenine N(6)-methyltransferase family. RsmA subfamily.

The protein localises to the cytoplasm. The catalysed reaction is adenosine(1518)/adenosine(1519) in 16S rRNA + 4 S-adenosyl-L-methionine = N(6)-dimethyladenosine(1518)/N(6)-dimethyladenosine(1519) in 16S rRNA + 4 S-adenosyl-L-homocysteine + 4 H(+). Its function is as follows. Specifically dimethylates two adjacent adenosines (A1518 and A1519) in the loop of a conserved hairpin near the 3'-end of 16S rRNA in the 30S particle. May play a critical role in biogenesis of 30S subunits. The sequence is that of Ribosomal RNA small subunit methyltransferase A from Leifsonia xyli subsp. xyli (strain CTCB07).